The sequence spans 308 residues: Ribonuclease Z (308 aa).

Zn(2+)-binding residues include His61, His63, Asp65, His66, His142, Asp211, and His270. The active-site Proton acceptor is Asp65.

This sequence belongs to the RNase Z family. In terms of assembly, homodimer. Zn(2+) is required as a cofactor.

The catalysed reaction is Endonucleolytic cleavage of RNA, removing extra 3' nucleotides from tRNA precursor, generating 3' termini of tRNAs. A 3'-hydroxy group is left at the tRNA terminus and a 5'-phosphoryl group is left at the trailer molecule.. Functionally, zinc phosphodiesterase, which displays some tRNA 3'-processing endonuclease activity. Probably involved in tRNA maturation, by removing a 3'-trailer from precursor tRNA. The polypeptide is Ribonuclease Z (Clostridium beijerinckii (strain ATCC 51743 / NCIMB 8052) (Clostridium acetobutylicum)).